A 512-amino-acid chain; its full sequence is Allene oxide synthase 1, chloroplastic (512 aa).

The N-terminal 25 residues, 1–25, are a transit peptide targeting the chloroplast; that stretch reads MATAAACISFASPSPARVVIRRQTR. A disordered region spans residues 23–43; sequence QTRASASASATDRQEVVSPKR. The heme b site is built by Lys127, His158, and Lys162. Asn315 contacts (13S)-hydroperoxy-(9Z,11E,15Z)-octadecatrienoate. Heme b contacts are provided by Lys463 and Cys465.

Belongs to the cytochrome P450 family. It depends on heme b as a cofactor. In terms of tissue distribution, expressed in coleoptiles, and at lower level in leaves of dark-grown seedlings.

The protein localises to the plastid. It localises to the chloroplast membrane. It carries out the reaction (13S)-hydroperoxy-(9Z,11E,15Z)-octadecatrienoate = (9Z,13S,15Z)-12,13-epoxyoctadeca-9,11,15-trienoate + H2O. The protein operates within lipid metabolism; oxylipin biosynthesis. In terms of biological role, involved in the biosynthesis of jasmonic acid, a growth regulator that is implicated also as a signaling molecule in plant defense. Converts 13-hydroperoxylinolenic acid to 12,13-epoxylinolenic acid. The chain is Allene oxide synthase 1, chloroplastic (CYP74A1) from Oryza sativa subsp. japonica (Rice).